We begin with the raw amino-acid sequence, 169 residues long: Peptide deformylase (169 aa).

Residues C94 and H136 each contribute to the Fe cation site. Residue E137 is part of the active site. A Fe cation-binding site is contributed by H140.

It belongs to the polypeptide deformylase family. Requires Fe(2+) as cofactor.

The catalysed reaction is N-terminal N-formyl-L-methionyl-[peptide] + H2O = N-terminal L-methionyl-[peptide] + formate. In terms of biological role, removes the formyl group from the N-terminal Met of newly synthesized proteins. Requires at least a dipeptide for an efficient rate of reaction. N-terminal L-methionine is a prerequisite for activity but the enzyme has broad specificity at other positions. This chain is Peptide deformylase, found in Phenylobacterium zucineum (strain HLK1).